Reading from the N-terminus, the 288-residue chain is Urease accessory protein UreD 1 (288 aa).

A compositionally biased stretch (pro residues) spans 1 to 10; the sequence is MHGPLAPAPS. The interval 1–35 is disordered; the sequence is MHGPLAPAPSPERLGAAPARQRSDGRIRLRVGPAR.

Belongs to the UreD family. In terms of assembly, ureD, UreF and UreG form a complex that acts as a GTP-hydrolysis-dependent molecular chaperone, activating the urease apoprotein by helping to assemble the nickel containing metallocenter of UreC. The UreE protein probably delivers the nickel.

It is found in the cytoplasm. In terms of biological role, required for maturation of urease via the functional incorporation of the urease nickel metallocenter. In Methylobacterium radiotolerans (strain ATCC 27329 / DSM 1819 / JCM 2831 / NBRC 15690 / NCIMB 10815 / 0-1), this protein is Urease accessory protein UreD 1.